The primary structure comprises 420 residues: Probable serine hydroxymethyltransferase (420 aa).

(6S)-5,6,7,8-tetrahydrofolate contacts are provided by residues Leu-121 and 125–127 (GHL). Lys-230 bears the N6-(pyridoxal phosphate)lysine mark. Residues Glu-246 and 354 to 356 (SPF) each bind (6S)-5,6,7,8-tetrahydrofolate.

The protein belongs to the SHMT family. As to quaternary structure, homodimer. Requires pyridoxal 5'-phosphate as cofactor.

It localises to the cytoplasm. The enzyme catalyses (6R)-5,10-methylene-5,6,7,8-tetrahydrofolate + glycine + H2O = (6S)-5,6,7,8-tetrahydrofolate + L-serine. The protein operates within one-carbon metabolism; tetrahydrofolate interconversion. Its function is as follows. Catalyzes the reversible interconversion of serine and glycine with tetrahydrofolate (THF) serving as the one-carbon carrier. This reaction serves as the major source of one-carbon groups required for the biosynthesis of purines, thymidylate, methionine, and other important biomolecules. The sequence is that of Probable serine hydroxymethyltransferase from Rickettsia bellii (strain RML369-C).